The following is a 188-amino-acid chain: MATIGMGDIKKNIRLIIGEVPCKVIEFQHVKPGKGAAFVRMKAKSFLNGRVFEKTVHAGDKFEVPEITFKTMQYLYDDGEQYQFMDNDSYEQIGLSYEQCDDASKWFKDGIQVDMIFYKGNAISVSAPEVMELLITDTPPNFKGDTSSGSKKPATLETGAVVQVPYHVLEGDTIRVNTVDCEYLEKVK.

The protein belongs to the elongation factor P family.

The protein localises to the cytoplasm. It participates in protein biosynthesis; polypeptide chain elongation. Functionally, involved in peptide bond synthesis. Stimulates efficient translation and peptide-bond synthesis on native or reconstituted 70S ribosomes in vitro. Probably functions indirectly by altering the affinity of the ribosome for aminoacyl-tRNA, thus increasing their reactivity as acceptors for peptidyl transferase. This is Elongation factor P from Sulfurimonas denitrificans (strain ATCC 33889 / DSM 1251) (Thiomicrospira denitrificans (strain ATCC 33889 / DSM 1251)).